The primary structure comprises 231 residues: NADH-ubiquinone oxidoreductase chain 4 (231 aa).

6 helical membrane-spanning segments follow: residues 1 to 21 (PIAGSMVLAAILLKLGGYGII), 34 to 54 (LFLPFIVLALWGAILANLTCL), 61 to 80 (SLIAYSSISHMGLVVAAIII), 84 to 106 (WGLSGAMALMIAHGFTSSALFCL), 128 to 148 (ILPMATTWWLLANLMNIATPP), and 169 to 189 (TIILLGLSMLITASYSLHMFL).

The protein belongs to the complex I subunit 4 family.

The protein resides in the mitochondrion membrane. It catalyses the reaction a ubiquinone + NADH + 5 H(+)(in) = a ubiquinol + NAD(+) + 4 H(+)(out). Core subunit of the mitochondrial membrane respiratory chain NADH dehydrogenase (Complex I) that is believed to belong to the minimal assembly required for catalysis. Complex I functions in the transfer of electrons from NADH to the respiratory chain. The immediate electron acceptor for the enzyme is believed to be ubiquinone. This chain is NADH-ubiquinone oxidoreductase chain 4 (MT-ND4), found in Metlapilcoatlus nummifer (Mexican jumping pitviper).